Consider the following 480-residue polypeptide: F-box only protein 3 (480 aa).

The F-box domain occupies 10 to 56; sequence LLTLESLPTDPLLLILSFVDYRDLINCCYVSRRLSQLSTHDPLWRRH. Residues 278 to 408 enclose the ApaG domain; sequence VATTGDITVS…FHMACPTFRV (131 aa). Residues 419–459 show a composition bias toward acidic residues; the sequence is EYEEMEEEAEEEEEEENDDSADMDESDESDEDENESDEGEG. The tract at residues 419–464 is disordered; it reads EYEEMEEEAEEEEEEENDDSADMDESDESDEDENESDEGEGEERRR.

Part of a SCF (SKP1-cullin-F-box) protein ligase complex SCF(FBXO3) consisting of FBXO3, SKP1, CUL1 and RBX1. Interacts with PML, interaction is direct and takes place either alone or within the SCF complex.

Its subcellular location is the nucleus. The protein operates within protein modification; protein ubiquitination. In terms of biological role, substrate recognition component of the SCF (SKP1-CUL1-F-box protein)-type E3 ubiquitin ligase complex, SCF(FBXO3), which mediates the ubiquitination and subsequent proteasomal degradation of target proteins. Mediates the ubiquitination of HIPK2 and probably that of EP300, leading to rapid degradation by the proteasome. In the presence of PML, HIPK2 ubiquitination still occurs, but degradation is prevented. PML, HIPK2 and FBXO3 may act synergically to activate p53/TP53-dependent transactivation. The SCF(FBXO3) also acts as a regulator of inflammation by mediating ubiquitination and degradation of FBXL2 in response to lipopolysaccharide (LPS). The SCF(FBXO3) complex specifically recognizes FBXL2 phosphorylated at 'Thr-404' and promotes its ubiquitination. This Rattus norvegicus (Rat) protein is F-box only protein 3 (Fbxo3).